A 971-amino-acid polypeptide reads, in one-letter code: Mating-type switching protein swi1 (971 aa).

Residues S528, S536, and S970 each carry the phosphoserine modification.

In terms of assembly, fork protection complex (FPC) consisting of swi1 and swi3 interacts with mat1 cis-acting sequences and mat1-proximal polar-terminator of replication (RTS1).

It localises to the nucleus. Forms a fork protection complex (FPC) with swi3. FPC coordinates leading and lagging strand synthesis and moves with the replication fork. It is required for programmed fork-pausing which is necessary for mating-type switching. FPC stabilizes replication forks in a configuration that is recognized by replication checkpoint sensors. It is involved in termination at the mat1-proximal polar-terminator of replication (RTS1) and also required for activation of the Rad53-like checkpoint kinase cds1. The protein is Mating-type switching protein swi1 (swi1) of Schizosaccharomyces pombe (strain 972 / ATCC 24843) (Fission yeast).